The sequence spans 368 residues: MASKTAADHFNRDSFVLAIDAMGGDHAPEIVVEGMAIAAERHPDARFLLVGDETLLAPLLARWPRAASVCTVRHAPVKVTGEMKAAAALRLRDSSMRIAIDAVAHGEASGVVSAGNSGALLALAKIILKTLPGIDRPALAAIMPSARGDILMLDLGANVLCDPRNLVEFAIMGDVFARSVLGLTAPRIGLLNVGSEEQKGDDRIRTAAEMLRTSHLAQQFHGFVEGHDIAGGTTDVVVADGFSGNIALKTAEGTAKMLGGLLKQIFTSTILARLGYLLARGGLERLREWLDPRRYNGAVLVGLNGVVVKSHGGTDAQGFAHAVDVGMDMVSNRSSDRIREGIAKLVELSGAAHPARDKDGTAQLAEAR.

The protein belongs to the PlsX family. In terms of assembly, homodimer. Probably interacts with PlsY.

The protein localises to the cytoplasm. The catalysed reaction is a fatty acyl-[ACP] + phosphate = an acyl phosphate + holo-[ACP]. Its pathway is lipid metabolism; phospholipid metabolism. Catalyzes the reversible formation of acyl-phosphate (acyl-PO(4)) from acyl-[acyl-carrier-protein] (acyl-ACP). This enzyme utilizes acyl-ACP as fatty acyl donor, but not acyl-CoA. The sequence is that of Phosphate acyltransferase from Granulibacter bethesdensis (strain ATCC BAA-1260 / CGDNIH1).